Consider the following 428-residue polypeptide: 3-phosphoshikimate 1-carboxyvinyltransferase (428 aa).

3-phosphoshikimate-binding residues include Lys-22, Ser-23, and Arg-27. Lys-22 is a binding site for phosphoenolpyruvate. Positions 96 and 124 each coordinate phosphoenolpyruvate. 3-phosphoshikimate-binding residues include Ser-169, Ser-170, Gln-171, Ser-197, Asp-313, Asn-336, and Lys-340. Gln-171 lines the phosphoenolpyruvate pocket. Catalysis depends on Asp-313, which acts as the Proton acceptor. Residues Arg-344, Arg-386, and Lys-411 each contribute to the phosphoenolpyruvate site.

This sequence belongs to the EPSP synthase family. In terms of assembly, monomer.

The protein resides in the cytoplasm. The enzyme catalyses 3-phosphoshikimate + phosphoenolpyruvate = 5-O-(1-carboxyvinyl)-3-phosphoshikimate + phosphate. It participates in metabolic intermediate biosynthesis; chorismate biosynthesis; chorismate from D-erythrose 4-phosphate and phosphoenolpyruvate: step 6/7. Its function is as follows. Catalyzes the transfer of the enolpyruvyl moiety of phosphoenolpyruvate (PEP) to the 5-hydroxyl of shikimate-3-phosphate (S3P) to produce enolpyruvyl shikimate-3-phosphate and inorganic phosphate. This Photorhabdus laumondii subsp. laumondii (strain DSM 15139 / CIP 105565 / TT01) (Photorhabdus luminescens subsp. laumondii) protein is 3-phosphoshikimate 1-carboxyvinyltransferase.